A 430-amino-acid polypeptide reads, in one-letter code: Serine hydroxymethyltransferase 2 (430 aa).

(6S)-5,6,7,8-tetrahydrofolate is bound by residues leucine 128 and 132 to 134 (GHL). Residue lysine 237 is modified to N6-(pyridoxal phosphate)lysine.

Belongs to the SHMT family. As to quaternary structure, homodimer. The cofactor is pyridoxal 5'-phosphate.

The protein resides in the cytoplasm. The enzyme catalyses (6R)-5,10-methylene-5,6,7,8-tetrahydrofolate + glycine + H2O = (6S)-5,6,7,8-tetrahydrofolate + L-serine. The protein operates within one-carbon metabolism; tetrahydrofolate interconversion. It functions in the pathway amino-acid biosynthesis; glycine biosynthesis; glycine from L-serine: step 1/1. In terms of biological role, catalyzes the reversible interconversion of serine and glycine with tetrahydrofolate (THF) serving as the one-carbon carrier. This reaction serves as the major source of one-carbon groups required for the biosynthesis of purines, thymidylate, methionine, and other important biomolecules. Also exhibits THF-independent aldolase activity toward beta-hydroxyamino acids, producing glycine and aldehydes, via a retro-aldol mechanism. The polypeptide is Serine hydroxymethyltransferase 2 (Rhodospirillum rubrum (strain ATCC 11170 / ATH 1.1.1 / DSM 467 / LMG 4362 / NCIMB 8255 / S1)).